A 269-amino-acid polypeptide reads, in one-letter code: 5'-nucleotidase SurE (269 aa).

The a divalent metal cation site is built by aspartate 11, aspartate 12, serine 42, and asparagine 90.

This sequence belongs to the SurE nucleotidase family. Requires a divalent metal cation as cofactor.

It localises to the cytoplasm. The catalysed reaction is a ribonucleoside 5'-phosphate + H2O = a ribonucleoside + phosphate. Nucleotidase that shows phosphatase activity on nucleoside 5'-monophosphates. The chain is 5'-nucleotidase SurE from Haloarcula marismortui (strain ATCC 43049 / DSM 3752 / JCM 8966 / VKM B-1809) (Halobacterium marismortui).